A 242-amino-acid polypeptide reads, in one-letter code: Floral homeotic protein AGAMOUS (242 aa).

In terms of domain architecture, MADS-box spans Arg19–Tyr73. The K-box domain occupies Ala103–Ala193.

As to expression, flower. Preferentially expressed in stamen and carpel and weakly in petal. Undetected in leaves and roots.

The protein localises to the nucleus. Its function is as follows. Probable transcription factor involved in regulating genes that determines stamen and carpel development in wild-type flowers. This Panax ginseng (Korean ginseng) protein is Floral homeotic protein AGAMOUS (AG2).